Consider the following 472-residue polypeptide: Adenosylhomocysteinase (472 aa).

Residues T62, D137, and E197 each contribute to the substrate site. 198–200 (TTT) is an NAD(+) binding site. Substrate-binding residues include K227 and D231. NAD(+)-binding positions include N232, 261–266 (GYGDVG), E284, N319, 340–342 (IGH), and N385.

It belongs to the adenosylhomocysteinase family. NAD(+) is required as a cofactor.

Its subcellular location is the cytoplasm. It catalyses the reaction S-adenosyl-L-homocysteine + H2O = L-homocysteine + adenosine. The protein operates within amino-acid biosynthesis; L-homocysteine biosynthesis; L-homocysteine from S-adenosyl-L-homocysteine: step 1/1. May play a key role in the regulation of the intracellular concentration of adenosylhomocysteine. The polypeptide is Adenosylhomocysteinase (Bordetella bronchiseptica (strain ATCC BAA-588 / NCTC 13252 / RB50) (Alcaligenes bronchisepticus)).